We begin with the raw amino-acid sequence, 46 residues long: uncharacterized protein (46 aa).

This is an uncharacterized protein from Shigella flexneri.